The following is a 156-amino-acid chain: Large ribosomal subunit protein uL30 (156 aa).

This sequence belongs to the universal ribosomal protein uL30 family. As to quaternary structure, part of the 50S ribosomal subunit.

In Thermofilum pendens (strain DSM 2475 / Hrk 5), this protein is Large ribosomal subunit protein uL30.